The sequence spans 72 residues: Cell division protein ZapB (72 aa).

The stretch at 5–71 (ILDQLEEKIK…LRSLLGQIDN (67 aa)) forms a coiled coil.

Belongs to the ZapB family. In terms of assembly, homodimer. The ends of the coiled-coil dimer bind to each other, forming polymers. Interacts with FtsZ.

It localises to the cytoplasm. Functionally, non-essential, abundant cell division factor that is required for proper Z-ring formation. It is recruited early to the divisome by direct interaction with FtsZ, stimulating Z-ring assembly and thereby promoting cell division earlier in the cell cycle. Its recruitment to the Z-ring requires functional FtsA or ZipA. The protein is Cell division protein ZapB of Actinobacillus pleuropneumoniae serotype 5b (strain L20).